A 300-amino-acid polypeptide reads, in one-letter code: MSYRELVVELAREHAEALSDALLELGALSVSVEDADADTPDEQPLFGEPGLVPDRTAWQHSRVIALLSPDHEPAVLLAAAVNDIGVTETPKFDVREVEEQDWVRLTQSQFEPIPIGERIWVVPSWHDAPDPDALILELDPGLAFGTGSHPTTRLCMEWLEQSVKPGQSVLDYGCGSGILAILARKCGANPVVGIDIDPQAVESARQNSERNHAEVTYGLPDACPAGEFDIVVANILSNPLKLMASMLASKVKPGGRIALSGVLARQADEVAAVYARYVDISVWREHEGWVCLAGTRRESH.

S-adenosyl-L-methionine is bound by residues T152, G173, D195, and N234.

Belongs to the methyltransferase superfamily. PrmA family.

Its subcellular location is the cytoplasm. The catalysed reaction is L-lysyl-[protein] + 3 S-adenosyl-L-methionine = N(6),N(6),N(6)-trimethyl-L-lysyl-[protein] + 3 S-adenosyl-L-homocysteine + 3 H(+). Its function is as follows. Methylates ribosomal protein L11. The sequence is that of Ribosomal protein L11 methyltransferase from Burkholderia ambifaria (strain MC40-6).